We begin with the raw amino-acid sequence, 37 residues long: Large ribosomal subunit protein bL36 (37 aa).

The protein belongs to the bacterial ribosomal protein bL36 family.

The polypeptide is Large ribosomal subunit protein bL36 (Rhodococcus erythropolis (strain PR4 / NBRC 100887)).